The primary structure comprises 156 residues: Small ribosomal subunit protein uS7 (156 aa).

This sequence belongs to the universal ribosomal protein uS7 family. As to quaternary structure, part of the 30S ribosomal subunit. Contacts proteins S9 and S11.

One of the primary rRNA binding proteins, it binds directly to 16S rRNA where it nucleates assembly of the head domain of the 30S subunit. Is located at the subunit interface close to the decoding center, probably blocks exit of the E-site tRNA. The protein is Small ribosomal subunit protein uS7 of Shewanella frigidimarina (strain NCIMB 400).